Consider the following 76-residue polypeptide: UPF0291 protein BA_1897/GBAA_1897/BAS1759 (76 aa).

It belongs to the UPF0291 family.

It localises to the cytoplasm. This chain is UPF0291 protein BA_1897/GBAA_1897/BAS1759, found in Bacillus anthracis.